Consider the following 486-residue polypeptide: Malonate-semialdehyde dehydrogenase (486 aa).

The NAD(+) site is built by Phe154, Lys178, Glu181, Arg182, and Ser231. Residue Cys286 is the Nucleophile of the active site. Residue Glu386 participates in NAD(+) binding.

The protein belongs to the aldehyde dehydrogenase family. IolA subfamily. As to quaternary structure, homotetramer.

The catalysed reaction is 3-oxopropanoate + NAD(+) + CoA + H2O = hydrogencarbonate + acetyl-CoA + NADH + H(+). The enzyme catalyses 2-methyl-3-oxopropanoate + NAD(+) + CoA + H2O = propanoyl-CoA + hydrogencarbonate + NADH + H(+). The protein operates within polyol metabolism; myo-inositol degradation into acetyl-CoA; acetyl-CoA from myo-inositol: step 7/7. Functionally, catalyzes the oxidation of malonate semialdehyde (MSA) and methylmalonate semialdehyde (MMSA) into acetyl-CoA and propanoyl-CoA, respectively. Is involved in a myo-inositol catabolic pathway. Bicarbonate, and not CO2, is the end-product of the enzymatic reaction. The sequence is that of Malonate-semialdehyde dehydrogenase from Bacillus pumilus (strain SAFR-032).